We begin with the raw amino-acid sequence, 604 residues long: uncharacterized protein (604 aa).

In terms of domain architecture, ABC transmembrane type-1 spans 49-332 (LILVMLMVVI…LANQFNTMLS (284 aa)). The next 4 membrane-spanning stretches (helical) occupy residues 50 to 70 (ILVM…PFVI), 86 to 106 (LIPV…SLWF), 172 to 192 (VITF…LTLI), and 288 to 308 (IAAI…SIVV). The 235-residue stretch at 366-600 (IEFRDVSFGY…KGFYSDLYES (235 aa)) folds into the ABC transporter domain. 399–406 (GPTGAGKT) contacts ATP. A helical membrane pass occupies residues 510–530 (LISIARAVLADPVLLILDEAT).

This sequence belongs to the ABC transporter superfamily.

It is found in the cell membrane. This is an uncharacterized protein from Bacillus subtilis (strain 168).